Here is a 1194-residue protein sequence, read N- to C-terminus: Multidrug efflux ATP-binding/permease protein Rv0194 (1194 aa).

6 consecutive transmembrane segments (helical) span residues 20-40 (LLLGFGAALAGTVIAVLVPLV), 56-76 (LAPWAVVLVAAAGATYLLMYV), 130-150 (LLFDVPNVLRHVLTLLLGVAV), 153-173 (WLSVPLALLAVLLVPVIGLIA), 258-278 (FALGGWMAAQGSITVGTFVAF), and 279-299 (WACLTLLARPACDLAGMLTIA). An ABC transmembrane type-1 1 domain is found at 21–301 (LLGFGAALAG…LAGMLTIAQQ (281 aa)). An ABC transporter 1 domain is found at 334 to 568 (LEFQRVSFGY…CPRYRELLSP (235 aa)). 367–374 (GAPGSGKS) is an ATP binding site. 6 helical membrane-spanning segments follow: residues 628-648 (ALSLLLVAVQTCAGLLPPLLI), 660-680 (VLSALWWAALAGTATVVIRWV), 743-763 (LVVAVISVVTLVGILVALLAI), 765-785 (ARLVLLIFTTMPVLALATWQF), 847-867 (LLALYYPFVALLCSLATTLVL), and 878-898 (VISVGALVTYLLYIELLYTPI). The ABC transmembrane type-1 2 domain maps to 628-910 (ALSLLLVAVQ…LAQMFDDYQR (283 aa)). One can recognise an ABC transporter 2 domain in the interval 942–1177 (VVFDAVHYSY…GGHYSRLWAA (236 aa)). 976–983 (GSTGSGKS) contacts ATP.

Belongs to the ABC transporter superfamily. Lipid exporter (TC 3.A.1.106) family.

Its subcellular location is the cell inner membrane. Its activity is regulated as follows. Efflux is inhibited by reserpine. Functionally, overexpression in M.smegmatis increases resistance to erythromycin, ampicillin, novobiocin and vancomycin. It also reduces accumulation of ethidium bromide in the cell. This Mycobacterium tuberculosis (strain ATCC 25618 / H37Rv) protein is Multidrug efflux ATP-binding/permease protein Rv0194.